Here is a 218-residue protein sequence, read N- to C-terminus: Pyridoxine/pyridoxamine 5'-phosphate oxidase (218 aa).

Residues 14–17 (RREY) and Lys-72 each bind substrate. Residues 67–72 (RIVLLK), 82–83 (YT), Arg-88, Lys-89, and Gln-111 contribute to the FMN site. Residues Tyr-129, Arg-133, and Ser-137 each contribute to the substrate site. Residues 146–147 (QS) and Trp-191 each bind FMN. 197–199 (RLH) lines the substrate pocket. FMN is bound at residue Arg-201.

This sequence belongs to the pyridoxamine 5'-phosphate oxidase family. In terms of assembly, homodimer. Requires FMN as cofactor.

The catalysed reaction is pyridoxamine 5'-phosphate + O2 + H2O = pyridoxal 5'-phosphate + H2O2 + NH4(+). The enzyme catalyses pyridoxine 5'-phosphate + O2 = pyridoxal 5'-phosphate + H2O2. The protein operates within cofactor metabolism; pyridoxal 5'-phosphate salvage; pyridoxal 5'-phosphate from pyridoxamine 5'-phosphate: step 1/1. It participates in cofactor metabolism; pyridoxal 5'-phosphate salvage; pyridoxal 5'-phosphate from pyridoxine 5'-phosphate: step 1/1. Functionally, catalyzes the oxidation of either pyridoxine 5'-phosphate (PNP) or pyridoxamine 5'-phosphate (PMP) into pyridoxal 5'-phosphate (PLP). The polypeptide is Pyridoxine/pyridoxamine 5'-phosphate oxidase (Salmonella paratyphi B (strain ATCC BAA-1250 / SPB7)).